The primary structure comprises 1198 residues: Tetratricopeptide repeat protein 17 (1198 aa).

One copy of the TPR 1 repeat lies at 295–328 (FTSYYTLGNIYAMLGEYNHSVLCYDHALQAKPGF). The stretch at 340–382 (CQQKLEQKLEAQHRSLQRTLNELKEYQKQHDHYLRQQEILEKH) forms a coiled coil. 2 TPR repeats span residues 619–652 (WLIL…APVQ) and 689–722 (PLTF…TTRC). 2 disordered regions span residues 771–825 (PQSL…KSEE) and 903–924 (KKPK…QAEN). Basic residues predominate over residues 903–914 (KKPKGDHKKPPG). TPR repeat units lie at residues 1071-1105 (SWVL…APHQ), 1108-1141 (DVPL…APHF), and 1142-1175 (AVNH…QPEF).

Belongs to the TTC17 family. Interacts with CATIP. In terms of tissue distribution, expressed in germ cells as well as in somatic cells of the testis (at protein level). Ubiquitous.

It localises to the cytoplasm. It is found in the cell membrane. The protein resides in the cytoskeleton. Plays a role in primary ciliogenesis by modulating actin polymerization. This is Tetratricopeptide repeat protein 17 (Ttc17) from Rattus norvegicus (Rat).